Consider the following 563-residue polypeptide: Tripeptidyl-peptidase 1 (563 aa).

The N-terminal stretch at 1–19 (MGLQACLLGLFALILSGKC) is a signal peptide. The propeptide at 20-195 (SYSPEPDQRR…PEPQVTGTVG (176 aa)) is removed in mature form. A disulfide bond links Cys111 and Cys122. The 365-residue stretch at 199-563 (GVTPSVIRKR…PALLKTLLNP (365 aa)) folds into the Peptidase S53 domain. Residues Asn210 and Asn222 are each glycosylated (N-linked (GlcNAc...) asparagine). Residues Glu272 and Asp276 each act as charge relay system in the active site. 3 N-linked (GlcNAc...) asparagine glycosylation sites follow: Asn286, Asn313, and Asn443. 2 disulfide bridges follow: Cys365–Cys526 and Cys522–Cys537. The active-site Charge relay system is Ser475. Ca(2+) is bound by residues Asp517 and Val518. Ca(2+) is bound by residues Gly539, Gly541, and Asp543.

In terms of assembly, monomer. Interacts with CLN5. Interacts with CLN3. The cofactor is Ca(2+). Post-translationally, activated by autocatalytic proteolytical processing upon acidification. N-glycosylation is required for processing and activity.

The protein resides in the lysosome. The protein localises to the melanosome. It carries out the reaction Release of an N-terminal tripeptide from a polypeptide, but also has endopeptidase activity.. Its function is as follows. Lysosomal serine protease with tripeptidyl-peptidase I activity. May act as a non-specific lysosomal peptidase which generates tripeptides from the breakdown products produced by lysosomal proteinases. Requires substrates with an unsubstituted N-terminus. In Pan troglodytes (Chimpanzee), this protein is Tripeptidyl-peptidase 1 (TPP1).